The following is a 579-amino-acid chain: Folliculin (579 aa).

Residues 32-82 (GAGSGDSPGQVEQAEEEEGGIQMSSRVRAHSPAEGASTDSSSPGPKKSDMC) form a disordered region. A phosphoserine mark is found at Ser-62 and Ser-73. The region spanning 86 to 242 (RSLAVGHPGY…RNGNAARSLT (157 aa)) is the uDENN FLCN/SMCR8-type domain. A coiled-coil region spans residues 287-310 (EKLADLEEESESWDNSEAEEEEKA). Residues 294 to 308 (EESESWDNSEAEEEE) are compositionally biased toward acidic residues. The disordered stretch occupies residues 294–320 (EESESWDNSEAEEEEKAPATAEGAEGR). Residues Ser-302, Ser-406, Ser-537, Ser-542, and Ser-571 each carry the phosphoserine modification. The region spanning 339 to 491 (QPPKLSVFKS…ILNKMEAALT (153 aa)) is the cDENN FLCN/SMCR8-type domain. The region spanning 493-558 (QNLSVDVVDQ…LLKFWMTGLS (66 aa)) is the dDENN FLCN/SMCR8-type domain.

This sequence belongs to the folliculin family. Interacts (via C-terminus) with FNIP1 or FNIP2 (via C-terminus). Component of the lysosomal folliculin complex (LFC), composed of FLCN, FNIP1 (or FNIP2), RagA/RRAGA or RagB/RRAGB GDP-bound, RagC/RRAGC or RagD/RRAGD GTP-bound, and Ragulator. Interaction with FNIP1 or FNIP2 mediates indirect interaction with the PRKAA1, PRKAB1 and PRKAG1 subunits of 5'-AMP-activated protein kinase (AMPK). Interacts with HSP90AA1 in the presence of FNIP1. Interacts with HSP70, STUB1, CDC37, AHSA1, CCT2, STIP1, PTGES3 and PPP5C. Interacts with GABARAP; interaction takes place in the presence of FNIP1 and/or FNIP2. Interacts with RILP; the interaction is direct and promotes association between RILP and RAB34. Interacts with KIF3A and KIF3B. Interacts with lactate dehydrogenase LDHA, but not LDHB; the interaction is direct, may preferentially bind LDHA dimers rather than tetramers, and regulates LDHA activity, acting as an uncompetitive inhibitor. Phosphorylation by ULK1 modulates the interaction with GABARAP and is required to regulate autophagy. Expressed in kidney.

It is found in the lysosome membrane. It localises to the cytoplasm. The protein localises to the cytosol. The protein resides in the cell projection. Its subcellular location is the cilium. It is found in the cytoskeleton. It localises to the microtubule organizing center. The protein localises to the centrosome. The protein resides in the spindle. Its subcellular location is the nucleus. Its activity is regulated as follows. GTPase-activating activity is inhibited in the folliculin complex (LFC), which stabilizes the GDP-bound state of RagA/RRAGA (or RagB/RRAGB), because Arg-164 is located far from the RagC/RRAGC or RagD/RRAGD nucleotide pocket. Disassembly of the LFC complex upon amino acid restimulation liberates the GTPase-activating activity. Functionally, multi-functional protein, involved in both the cellular response to amino acid availability and in the regulation of glycolysis. GTPase-activating protein that plays a key role in the cellular response to amino acid availability through regulation of the non-canonical mTORC1 signaling cascade controlling the MiT/TFE factors TFEB and TFE3. Activates mTORC1 by acting as a GTPase-activating protein: specifically stimulates GTP hydrolysis by RagC/RRAGC or RagD/RRAGD, promoting the conversion to the GDP-bound state of RagC/RRAGC or RagD/RRAGD, and thereby activating the kinase activity of mTORC1. The GTPase-activating activity is inhibited during starvation and activated in presence of nutrients. Acts as a key component for non-canonical mTORC1-dependent control of the MiT/TFE factors TFEB and TFE3, while it is not involved in mTORC1-dependent phosphorylation of canonical RPS6KB1/S6K1 and EIF4EBP1/4E-BP1. In low-amino acid conditions, the lysosomal folliculin complex (LFC) is formed on the membrane of lysosomes, which inhibits the GTPase-activating activity of FLCN, inactivates mTORC1 and maximizes nuclear translocation of TFEB and TFE3. Upon amino acid restimulation, RagA/RRAGA (or RagB/RRAGB) nucleotide exchange promotes disassembly of the LFC complex and liberates the GTPase-activating activity of FLCN, leading to activation of mTORC1 and subsequent cytoplasmic retention of TFEB and TFE3. Indirectly acts as a positive regulator of Wnt signaling by promoting mTOR-dependent cytoplasmic retention of MiT/TFE factor TFE3. Required for the exit of hematopoietic stem cell from pluripotency by promoting mTOR-dependent cytoplasmic retention of TFE3, thereby increasing Wnt signaling. Involved in the control of embryonic stem cells differentiation; together with LAMTOR1 it is necessary to recruit and activate RagC/RRAGC and RagD/RRAGD at the lysosomes, and to induce exit of embryonic stem cells from pluripotency via non-canonical, mTOR-independent TFE3 inactivation. Acts as an inhibitor of browning of adipose tissue by regulating mTOR-dependent cytoplasmic retention of TFE3. In response to flow stress, regulates STK11/LKB1 accumulation and mTORC1 activation through primary cilia: may act by recruiting STK11/LKB1 to primary cilia for activation of AMPK resided at basal bodies, causing mTORC1 down-regulation. Together with FNIP1 and/or FNIP2, regulates autophagy: following phosphorylation by ULK1, interacts with GABARAP and promotes autophagy. Required for starvation-induced perinuclear clustering of lysosomes by promoting association of RILP with its effector RAB34. Regulates glycolysis by binding to lactate dehydrogenase LDHA, acting as an uncompetitive inhibitor. This is Folliculin from Rattus norvegicus (Rat).